Here is a 158-residue protein sequence, read N- to C-terminus: Large ribosomal subunit protein uL16 (158 aa).

This sequence belongs to the universal ribosomal protein uL16 family. Part of the 50S ribosomal subunit.

Functionally, binds 23S rRNA and is also seen to make contacts with the A and possibly P site tRNAs. The polypeptide is Large ribosomal subunit protein uL16 (Parasynechococcus marenigrum (strain WH8102)).